The following is a 65-amino-acid chain: Beta-defensin 106A (65 aa).

Residues 1-20 (MRTFLFLFAVLFFLTPAKNA) form the signal peptide. Disulfide bonds link cysteine 26/cysteine 53, cysteine 33/cysteine 47, and cysteine 37/cysteine 54.

This sequence belongs to the beta-defensin family. As to quaternary structure, monomer. Interacts with CCR2 (via extracellular N-terminal region); this interaction may preferentially require specific tyrosine sulfation on CCR2.

Its subcellular location is the secreted. It is found in the membrane. Has antibacterial activity. Acts as a ligand for C-C chemokine receptor CCR2. The polypeptide is Beta-defensin 106A (DEFB106A) (Gorilla gorilla gorilla (Western lowland gorilla)).